We begin with the raw amino-acid sequence, 289 residues long: Zinc finger matrin-type protein 3 (289 aa).

Matrin-type zinc fingers lie at residues L70–N100 and D147–L177. 2 disordered regions span residues A180–E202 and E265–Q289. The segment at F245–E275 adopts a Matrin-type 3 zinc-finger fold. Basic and acidic residues predominate over residues E265–M282.

As to quaternary structure, interacts with dsRNA. In terms of tissue distribution, highly expressed in brain, gut, lung, and testis.

It localises to the nucleus. Its subcellular location is the nucleolus. In terms of biological role, acts as a bona fide target gene of p53/TP53. May play a role in the TP53-dependent growth regulatory pathway. May contribute to TP53-mediated apoptosis by regulation of TP53 expression and translocation to the nucleus and nucleolus. In Rattus norvegicus (Rat), this protein is Zinc finger matrin-type protein 3.